Reading from the N-terminus, the 345-residue chain is Platelet-derived growth factor C (345 aa).

Positions 1-22 (MLLLGLLLLTSALAGQRTGTRA) are cleaved as a signal peptide. Polar residues predominate over residues 24-33 (SNLSSKLQLS). The disordered stretch occupies residues 24-45 (SNLSSKLQLSSDKEQNGVQDPR). A glycan (N-linked (GlcNAc...) asparagine) is linked at asparagine 25. The span at 34–45 (SDKEQNGVQDPR) shows a compositional bias: basic and acidic residues. Positions 46–163 (HERVVTISGN…PGFCIHYSII (118 aa)) constitute a CUB domain. N-linked (GlcNAc...) asparagine glycosylation occurs at asparagine 55. 4 disulfides stabilise this stretch: cysteine 104/cysteine 124, cysteine 250/cysteine 294, cysteine 280/cysteine 335, and cysteine 287/cysteine 337.

This sequence belongs to the PDGF/VEGF growth factor family. In terms of assembly, homodimer; disulfide-linked. Interacts with PDGFRA homodimers, and with heterodimers formed by PDGFRA and PDGFRB. Interacts (via CUB domain) with PLAT (via kringle domain). Proteolytic removal of the N-terminal CUB domain releasing the core domain is necessary for unmasking the receptor-binding epitopes of the core domain. Cleavage after basic residues in the hinge region (region connecting the CUB and growth factor domains) gives rise to the receptor-binding form. Cleaved by PLAT and PLG. In terms of processing, sumoylated by SUMO1. Post-translationally, N-glycosylated. Mainly expressed in kidney, testis, liver, heart and brain (at protein level). Highly expressed in airway epithelium, interstitial cells and alveolar macrophages in the lung of mice overexpressing IL13. Expressed in the ovaries.

The protein resides in the cytoplasm. It localises to the cytosol. The protein localises to the secreted. It is found in the nucleus. Its subcellular location is the cytoplasmic granule. The protein resides in the cell membrane. Functionally, growth factor that plays an essential role in the regulation of embryonic development, cell proliferation, cell migration, survival and chemotaxis. Potent mitogen and chemoattractant for cells of mesenchymal origin. Required for normal skeleton formation during embryonic development, especially for normal development of the craniofacial skeleton and for normal development of the palate. Required for normal skin morphogenesis during embryonic development. Plays an important role in wound healing, where it appears to be involved in three stages: inflammation, proliferation and remodeling. Plays an important role in angiogenesis and blood vessel development. Involved in fibrotic processes, in which transformation of interstitial fibroblasts into myofibroblasts plus collagen deposition occurs. The CUB domain has mitogenic activity in coronary artery smooth muscle cells, suggesting a role beyond the maintenance of the latency of the PDGF domain. In the nucleus, PDGFC seems to have additional function. This chain is Platelet-derived growth factor C (Pdgfc), found in Mus musculus (Mouse).